The following is a 200-amino-acid chain: Recombination protein RecR (200 aa).

The C4-type zinc-finger motif lies at 57–72 (CRQCRTLTEDDLCPQC). One can recognise a Toprim domain in the interval 80–175 (TLLCVVEGPM…IASRIAHGVP (96 aa)).

It belongs to the RecR family.

In terms of biological role, may play a role in DNA repair. It seems to be involved in an RecBC-independent recombinational process of DNA repair. It may act with RecF and RecO. In Pseudomonas fluorescens (strain Pf0-1), this protein is Recombination protein RecR.